The sequence spans 119 residues: MAGGKEPIEVKFRLFDGTDIGPSKYDPSTTVSALKEFILARWPQDKEITPKTVNDLKLINAGRILENNRTLAESRVPVGEVPGGVITMHVVVRPPQPDKNSEKQLANSPKQNRCGCTIL.

The region spanning 8–76 is the Ubiquitin-like domain; that stretch reads IEVKFRLFDG…NNRTLAESRV (69 aa). Position 116 is a cysteine methyl ester (cysteine 116). Cysteine 116 is lipidated: S-geranylgeranyl cysteine. Positions 117–119 are cleaved as a propeptide — removed in mature form; sequence TIL.

The protein localises to the cell membrane. In terms of biological role, may serve as docking site to facilitate the association of other proteins to the plasma membrane. The sequence is that of Membrane-anchored ubiquitin-fold protein 3 (MUB3) from Oryza sativa subsp. japonica (Rice).